The sequence spans 483 residues: Scarecrow-like protein 26 (483 aa).

In terms of domain architecture, GRAS spans 95-477 (KTDESKGLRL…RRLVSASFWA (383 aa)). A leucine repeat I (LRI) region spans residues 102-165 (LRLVHLLVAA…SKLLERDSVL (64 aa)). Positions 184-251 (FELLQNMSPY…PSAQHLRITA (68 aa)) are VHIID. The short motif at 215-219 (IHIVD) is the VHIID element. Positions 267–299 (ETGRRLTAFADSIGQPFSYQHCKLDTNAFSTSS) are leucine repeat II (LRII). The interval 308–400 (VVINCMLHLP…RVFIGPWVAN (93 aa)) is PFYRE. The tract at residues 403–477 (TRITANDAEV…RRLVSASFWA (75 aa)) is SAW.

This sequence belongs to the GRAS family. As to expression, expressed in seedlings, roots, leaves and flowers.

The protein resides in the nucleus. Its function is as follows. Probable transcription factor involved in plant development. The sequence is that of Scarecrow-like protein 26 (SCL26) from Arabidopsis thaliana (Mouse-ear cress).